A 189-amino-acid polypeptide reads, in one-letter code: UPF0301 protein CCA_00630 (189 aa).

This sequence belongs to the UPF0301 (AlgH) family.

The chain is UPF0301 protein CCA_00630 from Chlamydia caviae (strain ATCC VR-813 / DSM 19441 / 03DC25 / GPIC) (Chlamydophila caviae).